Here is a 181-residue protein sequence, read N- to C-terminus: NAD(P)H-quinone oxidoreductase subunit I, chloroplastic (181 aa).

4Fe-4S ferredoxin-type domains lie at 52 to 81 (GRIHFEFDKCIACEVCVRVCPINLPVVDWE) and 92 to 121 (KSYSIDFGVCIFCGNCVEFCPTNCLSMTEE). [4Fe-4S] cluster-binding residues include Cys61, Cys64, Cys67, Cys71, Cys101, Cys104, Cys107, and Cys111.

The protein belongs to the complex I 23 kDa subunit family. As to quaternary structure, NDH is composed of at least 16 different subunits, 5 of which are encoded in the nucleus. The cofactor is [4Fe-4S] cluster.

It localises to the plastid. It is found in the chloroplast thylakoid membrane. The enzyme catalyses a plastoquinone + NADH + (n+1) H(+)(in) = a plastoquinol + NAD(+) + n H(+)(out). The catalysed reaction is a plastoquinone + NADPH + (n+1) H(+)(in) = a plastoquinol + NADP(+) + n H(+)(out). In terms of biological role, NDH shuttles electrons from NAD(P)H:plastoquinone, via FMN and iron-sulfur (Fe-S) centers, to quinones in the photosynthetic chain and possibly in a chloroplast respiratory chain. The immediate electron acceptor for the enzyme in this species is believed to be plastoquinone. Couples the redox reaction to proton translocation, and thus conserves the redox energy in a proton gradient. The chain is NAD(P)H-quinone oxidoreductase subunit I, chloroplastic from Staurastrum punctulatum (Green alga).